Here is a 542-residue protein sequence, read N- to C-terminus: Phenylacetone monooxygenase (542 aa).

FAD is bound by residues S27, E46, 54 to 57 (VWYW), D66, Y72, V119, and Q152. 64–66 (RCD) is an NADP(+) binding site. NADP(+) contacts are provided by residues 194-200 (TGSSGIQ), 217-218 (RT), and 336-337 (KR). An FAD-binding site is contributed by M446. W501 is an NADP(+) binding site.

This sequence belongs to the FAD-binding monooxygenase family. Monomer. The cofactor is FAD.

It carries out the reaction phenylacetone + NADPH + O2 + H(+) = benzyl acetate + NADP(+) + H2O. In terms of biological role, catalyzes a Baeyer-Villiger oxidation reaction, i.e. the insertion of an oxygen atom into a carbon-carbon bond adjacent to a carbonyl, which converts ketones to esters. Is most efficient with phenylacetone as substrate, leading to the formation of benzyl acetate. Can also oxidize other aromatic ketones (benzylacetone, alpha-methylphenylacetone and 4-hydroxyacetophenone), some aliphatic ketones (dodecan-2-one and bicyclohept-2-en-6-one) and sulfides (e.g. methyl 4-tolylsulfide). This Thermobifida fusca (strain YX) protein is Phenylacetone monooxygenase (pamO).